Here is a 354-residue protein sequence, read N- to C-terminus: Biotin synthase (354 aa).

In terms of domain architecture, Radical SAM core spans 40–258; the sequence is NEVQVSTLLS…IAVARILMPR (219 aa). Positions 55, 59, and 62 each coordinate [4Fe-4S] cluster. [2Fe-2S] cluster is bound by residues C99, C130, C190, and R262.

It belongs to the radical SAM superfamily. Biotin synthase family. In terms of assembly, homodimer. [4Fe-4S] cluster serves as cofactor. Requires [2Fe-2S] cluster as cofactor.

The catalysed reaction is (4R,5S)-dethiobiotin + (sulfur carrier)-SH + 2 reduced [2Fe-2S]-[ferredoxin] + 2 S-adenosyl-L-methionine = (sulfur carrier)-H + biotin + 2 5'-deoxyadenosine + 2 L-methionine + 2 oxidized [2Fe-2S]-[ferredoxin]. The protein operates within cofactor biosynthesis; biotin biosynthesis; biotin from 7,8-diaminononanoate: step 2/2. Functionally, catalyzes the conversion of dethiobiotin (DTB) to biotin by the insertion of a sulfur atom into dethiobiotin via a radical-based mechanism. The sequence is that of Biotin synthase from Hahella chejuensis (strain KCTC 2396).